Consider the following 276-residue polypeptide: MTETWNFINTGSKDPYYNMAMDEALLNFVSRGEIDPVIRFYTWNPATLSIGYFQRLQKEIDIDKVKEKGFGLVRRQTGGRGVLHDKELTYSVIVPESHPNMPSTVTEAYRVISQGLLEGFKNLGFDTYFAVPKTPEERQKLKQPRSSVCFDAPSWYELVVEGRKIAGSAQTRQKGVILQHGSILQDIDIDELFDMFIYKNERLKLKMKEAFVEKAVAINDISDEHITISQMEEAFEKGFKKGLNIELKPLELTEAQLAEVEELTEKYRSDEWMFRK.

The 216-residue stretch at 32–247 (GEIDPVIRFY…GFKKGLNIEL (216 aa)) folds into the BPL/LPL catalytic domain. Catalysis depends on Cys149, which acts as the Acyl-thioester intermediate.

It belongs to the octanoyltransferase LipM family. In terms of assembly, monomer.

It carries out the reaction octanoyl-[ACP] + L-lysyl-[protein] = N(6)-octanoyl-L-lysyl-[protein] + holo-[ACP] + H(+). It participates in protein modification; protein lipoylation via endogenous pathway; protein N(6)-(lipoyl)lysine from octanoyl-[acyl-carrier-protein]. Its function is as follows. Catalyzes the transfer of endogenously produced octanoic acid from octanoyl-acyl-carrier-protein onto the lipoyl domain of GcvH, an intermediate carrier during protein lipoylation. The sequence is that of Octanoyltransferase LipM from Staphylococcus aureus (strain NCTC 8325 / PS 47).